A 252-amino-acid chain; its full sequence is Nicotinamide/nicotinic acid mononucleotide adenylyltransferase 3 (252 aa).

The NAD(+) site is built by serine 14 and phenylalanine 15. Positions 22 and 56 each coordinate ATP. NAD(+) contacts are provided by tryptophan 90, threonine 93, glycine 135, and aspartate 137. Position 140 (lysine 140) interacts with ATP. NAD(+)-binding residues include leucine 147, tryptophan 148, arginine 167, and asparagine 198. 203-206 (TYIR) contributes to the ATP binding site.

Belongs to the eukaryotic NMN adenylyltransferase family. As to quaternary structure, homotetramer. Mg(2+) serves as cofactor. Expressed in lung and spleen with lower levels in placenta and kidney.

Its subcellular location is the mitochondrion. It carries out the reaction beta-nicotinamide D-ribonucleotide + ATP + H(+) = diphosphate + NAD(+). The catalysed reaction is nicotinate beta-D-ribonucleotide + ATP + H(+) = deamido-NAD(+) + diphosphate. Its pathway is cofactor biosynthesis; NAD(+) biosynthesis; NAD(+) from nicotinamide D-ribonucleotide: step 1/1. It functions in the pathway cofactor biosynthesis; NAD(+) biosynthesis; deamido-NAD(+) from nicotinate D-ribonucleotide: step 1/1. Activity is strongly inhibited by galotannin. Inhibited by P1-(adenosine-5')-P4-(nicotinic-acid-riboside-5')-tetraphosphate (Nap4AD). Catalyzes the formation of NAD(+) from nicotinamide mononucleotide (NMN) and ATP. Can also use the deamidated form; nicotinic acid mononucleotide (NaMN) as substrate with the same efficiency. Can use triazofurin monophosphate (TrMP) as substrate. Can also use GTP and ITP as nucleotide donors. Also catalyzes the reverse reaction, i.e. the pyrophosphorolytic cleavage of NAD(+). For the pyrophosphorolytic activity, can use NAD(+), NADH, NaAD, nicotinic acid adenine dinucleotide phosphate (NHD), nicotinamide guanine dinucleotide (NGD) as substrates. Fails to cleave phosphorylated dinucleotides NADP(+), NADPH and NaADP(+). Protects against axonal degeneration following injury. May be involved in the maintenance of axonal integrity. Also functions as a stress-response chaperone protein that prevents toxic aggregation of proteins; this function may be independent of its NAD(+) synthesis activity. This chain is Nicotinamide/nicotinic acid mononucleotide adenylyltransferase 3, found in Homo sapiens (Human).